The primary structure comprises 311 residues: Aspartate carbamoyltransferase catalytic subunit (311 aa).

Arginine 55 and threonine 56 together coordinate carbamoyl phosphate. Lysine 85 serves as a coordination point for L-aspartate. Carbamoyl phosphate is bound by residues arginine 106, histidine 135, and glutamine 138. The L-aspartate site is built by arginine 168 and arginine 230. Residues leucine 268 and proline 269 each contribute to the carbamoyl phosphate site.

Belongs to the aspartate/ornithine carbamoyltransferase superfamily. ATCase family. In terms of assembly, heterododecamer (2C3:3R2) of six catalytic PyrB chains organized as two trimers (C3), and six regulatory PyrI chains organized as three dimers (R2).

The catalysed reaction is carbamoyl phosphate + L-aspartate = N-carbamoyl-L-aspartate + phosphate + H(+). Its pathway is pyrimidine metabolism; UMP biosynthesis via de novo pathway; (S)-dihydroorotate from bicarbonate: step 2/3. Catalyzes the condensation of carbamoyl phosphate and aspartate to form carbamoyl aspartate and inorganic phosphate, the committed step in the de novo pyrimidine nucleotide biosynthesis pathway. This is Aspartate carbamoyltransferase catalytic subunit from Salmonella arizonae (strain ATCC BAA-731 / CDC346-86 / RSK2980).